The following is a 210-amino-acid chain: Ribosomal RNA large subunit methyltransferase E (210 aa).

Glycine 61, tryptophan 63, aspartate 81, aspartate 97, and aspartate 122 together coordinate S-adenosyl-L-methionine. Catalysis depends on lysine 162, which acts as the Proton acceptor. A compositionally biased stretch (basic and acidic residues) spans 187–196 (KPEASRKRSP). The interval 187 to 210 (KPEASRKRSPEVYALGQGKRAHMK) is disordered.

The protein belongs to the class I-like SAM-binding methyltransferase superfamily. RNA methyltransferase RlmE family.

It localises to the cytoplasm. The catalysed reaction is uridine(2552) in 23S rRNA + S-adenosyl-L-methionine = 2'-O-methyluridine(2552) in 23S rRNA + S-adenosyl-L-homocysteine + H(+). Specifically methylates the uridine in position 2552 of 23S rRNA at the 2'-O position of the ribose in the fully assembled 50S ribosomal subunit. This chain is Ribosomal RNA large subunit methyltransferase E, found in Stenotrophomonas maltophilia (strain K279a).